The sequence spans 157 residues: Small ribosomal subunit protein uS7c (157 aa).

It belongs to the universal ribosomal protein uS7 family. As to quaternary structure, part of the 30S ribosomal subunit.

The protein localises to the plastid. The protein resides in the organellar chromatophore. In terms of biological role, one of the primary rRNA binding proteins, it binds directly to 16S rRNA where it nucleates assembly of the head domain of the 30S subunit. The chain is Small ribosomal subunit protein uS7c (rps7) from Paulinella chromatophora.